Consider the following 371-residue polypeptide: Glycosyltransferase 8 domain-containing protein 1 (371 aa).

The Cytoplasmic segment spans residues 1–5; it reads MSFRK. A helical; Signal-anchor for type II membrane protein transmembrane segment spans residues 6–26; it reads VTIIIWALAVILFLLALHHNF. Topologically, residues 27 to 371 are lumenal; sequence LSLSSLLRND…RRHMDTSNIK (345 aa). Asparagine 257 is a glycosylation site (N-linked (GlcNAc...) asparagine).

It belongs to the glycosyltransferase 8 family.

Its subcellular location is the membrane. This chain is Glycosyltransferase 8 domain-containing protein 1 (Glt8d1), found in Rattus norvegicus (Rat).